A 330-amino-acid polypeptide reads, in one-letter code: 4-hydroxythreonine-4-phosphate dehydrogenase (330 aa).

Residues histidine 134 and threonine 135 each contribute to the substrate site. A divalent metal cation is bound by residues histidine 163, histidine 208, and histidine 263. The substrate site is built by lysine 271, asparagine 280, and arginine 289.

This sequence belongs to the PdxA family. In terms of assembly, homodimer. Zn(2+) serves as cofactor. Requires Mg(2+) as cofactor. Co(2+) is required as a cofactor.

It localises to the cytoplasm. It catalyses the reaction 4-(phosphooxy)-L-threonine + NAD(+) = 3-amino-2-oxopropyl phosphate + CO2 + NADH. It participates in cofactor biosynthesis; pyridoxine 5'-phosphate biosynthesis; pyridoxine 5'-phosphate from D-erythrose 4-phosphate: step 4/5. Its function is as follows. Catalyzes the NAD(P)-dependent oxidation of 4-(phosphooxy)-L-threonine (HTP) into 2-amino-3-oxo-4-(phosphooxy)butyric acid which spontaneously decarboxylates to form 3-amino-2-oxopropyl phosphate (AHAP). In Methylococcus capsulatus (strain ATCC 33009 / NCIMB 11132 / Bath), this protein is 4-hydroxythreonine-4-phosphate dehydrogenase.